Reading from the N-terminus, the 197-residue chain is 3-isopropylmalate dehydratase small subunit (197 aa).

Belongs to the LeuD family. LeuD type 1 subfamily. Heterodimer of LeuC and LeuD.

The catalysed reaction is (2R,3S)-3-isopropylmalate = (2S)-2-isopropylmalate. Its pathway is amino-acid biosynthesis; L-leucine biosynthesis; L-leucine from 3-methyl-2-oxobutanoate: step 2/4. Catalyzes the isomerization between 2-isopropylmalate and 3-isopropylmalate, via the formation of 2-isopropylmaleate. The chain is 3-isopropylmalate dehydratase small subunit from Streptococcus suis (strain 98HAH33).